A 1057-amino-acid chain; its full sequence is Carbamoyl phosphate synthase large chain (1057 aa).

The carboxyphosphate synthetic domain stretch occupies residues 1–401 (MPKRNDIKTI…SLLKAIRSLE (401 aa)). ATP contacts are provided by R129, R169, G175, G176, K208, I210, E215, G241, I242, H243, Q284, and E298. One can recognise an ATP-grasp 1 domain in the interval 133–327 (RTLMNDLNVP…IAKLAAKIAV (195 aa)). Residues Q284, E298, and N300 each coordinate Mg(2+). Mn(2+)-binding residues include Q284, E298, and N300. An oligomerization domain region spans residues 402-546 (YGVHHLGLPN…YGTYETENES (145 aa)). Residues 547-929 (IVTDKEKILV…ALFKGLTGSG (383 aa)) are carbamoyl phosphate synthetic domain. In terms of domain architecture, ATP-grasp 2 spans 671 to 861 (EALLRKINVP…MAQLAMRAII (191 aa)). Residues R707, R746, L748, E752, G777, V778, H779, S780, Q820, and E832 each contribute to the ATP site. Residues Q820, E832, and N834 each coordinate Mg(2+). Residues Q820, E832, and N834 each contribute to the Mn(2+) site. In terms of domain architecture, MGS-like spans 930–1057 (VEVKDHGTVL…ESMTFTMRQM (128 aa)). The segment at 930–1057 (VEVKDHGTVL…ESMTFTMRQM (128 aa)) is allosteric domain.

This sequence belongs to the CarB family. In terms of assembly, composed of two chains; the small (or glutamine) chain promotes the hydrolysis of glutamine to ammonia, which is used by the large (or ammonia) chain to synthesize carbamoyl phosphate. Tetramer of heterodimers (alpha,beta)4. Mg(2+) serves as cofactor. Requires Mn(2+) as cofactor.

The enzyme catalyses hydrogencarbonate + L-glutamine + 2 ATP + H2O = carbamoyl phosphate + L-glutamate + 2 ADP + phosphate + 2 H(+). It carries out the reaction hydrogencarbonate + NH4(+) + 2 ATP = carbamoyl phosphate + 2 ADP + phosphate + 2 H(+). The protein operates within amino-acid biosynthesis; L-arginine biosynthesis; carbamoyl phosphate from bicarbonate: step 1/1. Its pathway is pyrimidine metabolism; UMP biosynthesis via de novo pathway; (S)-dihydroorotate from bicarbonate: step 1/3. Large subunit of the glutamine-dependent carbamoyl phosphate synthetase (CPSase). CPSase catalyzes the formation of carbamoyl phosphate from the ammonia moiety of glutamine, carbonate, and phosphate donated by ATP, constituting the first step of 2 biosynthetic pathways, one leading to arginine and/or urea and the other to pyrimidine nucleotides. The large subunit (synthetase) binds the substrates ammonia (free or transferred from glutamine from the small subunit), hydrogencarbonate and ATP and carries out an ATP-coupled ligase reaction, activating hydrogencarbonate by forming carboxy phosphate which reacts with ammonia to form carbamoyl phosphate. This is Carbamoyl phosphate synthase large chain from Staphylococcus aureus (strain MRSA252).